Reading from the N-terminus, the 155-residue chain is Reticulon-like protein B23 (155 aa).

The Reticulon domain maps to 1 to 155; that stretch reads MGEMGKAIGL…LNRRNGEILD (155 aa). The next 2 membrane-spanning stretches (helical) occupy residues 30-50 and 117-137; these read SLIS…GLLF and IISG…SMLF.

It is found in the endoplasmic reticulum membrane. The protein is Reticulon-like protein B23 (RTNLB23) of Arabidopsis thaliana (Mouse-ear cress).